The primary structure comprises 237 residues: Protein GrpE (237 aa).

Disordered regions lie at residues 1-52 and 200-237; these read MSGD…RLQQ and KVSMGPGPQSGASPSSAQPNDDSTATFQGEADPAQPGV. Positions 27–40 are enriched in polar residues; sequence ASINSDEGQSSAQS. Positions 204–218 are enriched in low complexity; sequence GPGPQSGASPSSAQP.

The protein belongs to the GrpE family. In terms of assembly, homodimer.

It localises to the cytoplasm. Functionally, participates actively in the response to hyperosmotic and heat shock by preventing the aggregation of stress-denatured proteins, in association with DnaK and GrpE. It is the nucleotide exchange factor for DnaK and may function as a thermosensor. Unfolded proteins bind initially to DnaJ; upon interaction with the DnaJ-bound protein, DnaK hydrolyzes its bound ATP, resulting in the formation of a stable complex. GrpE releases ADP from DnaK; ATP binding to DnaK triggers the release of the substrate protein, thus completing the reaction cycle. Several rounds of ATP-dependent interactions between DnaJ, DnaK and GrpE are required for fully efficient folding. This Prochlorococcus marinus (strain MIT 9313) protein is Protein GrpE.